We begin with the raw amino-acid sequence, 200 residues long: Large ribosomal subunit protein uL4 (200 aa).

Residues 43–71 (RAQKTRAEVSGSGKKPWRQKGTGRARSGD) are disordered.

The protein belongs to the universal ribosomal protein uL4 family. As to quaternary structure, part of the 50S ribosomal subunit.

One of the primary rRNA binding proteins, this protein initially binds near the 5'-end of the 23S rRNA. It is important during the early stages of 50S assembly. It makes multiple contacts with different domains of the 23S rRNA in the assembled 50S subunit and ribosome. In terms of biological role, forms part of the polypeptide exit tunnel. The chain is Large ribosomal subunit protein uL4 from Pasteurella multocida (strain Pm70).